Reading from the N-terminus, the 45-residue chain is Photosystem II reaction center protein K (45 aa).

Positions 1–8 (MDFALLLA) are excised as a propeptide. A helical transmembrane segment spans residues 24–44 (LPLIPLFFLLLAFVWQAAVGF).

The protein belongs to the PsbK family. PSII is composed of 1 copy each of membrane proteins PsbA, PsbB, PsbC, PsbD, PsbE, PsbF, PsbH, PsbI, PsbJ, PsbK, PsbL, PsbM, PsbT, PsbX, PsbY, PsbZ, Psb30/Ycf12, peripheral proteins PsbO, CyanoQ (PsbQ), PsbU, PsbV and a large number of cofactors. It forms dimeric complexes.

The protein resides in the cellular thylakoid membrane. One of the components of the core complex of photosystem II (PSII). PSII is a light-driven water:plastoquinone oxidoreductase that uses light energy to abstract electrons from H(2)O, generating O(2) and a proton gradient subsequently used for ATP formation. It consists of a core antenna complex that captures photons, and an electron transfer chain that converts photonic excitation into a charge separation. The chain is Photosystem II reaction center protein K from Gloeothece citriformis (strain PCC 7424) (Cyanothece sp. (strain PCC 7424)).